A 90-amino-acid chain; its full sequence is Putative defensin-like protein 243 (90 aa).

The signal sequence occupies residues 1 to 19 (MKVEVIFLASCVLFSLIHA). 4 disulfide bridges follow: C33–C88, C43–C72, C53–C82, and C70–C84.

It belongs to the DEFL family.

It localises to the secreted. The polypeptide is Putative defensin-like protein 243 (SCRL9) (Arabidopsis thaliana (Mouse-ear cress)).